A 286-amino-acid chain; its full sequence is Plasma membrane ascorbate-dependent reductase CYBRD1 (286 aa).

The Cytoplasmic segment spans residues 1 to 7 (MAMEGYR). The chain crosses the membrane as a helical span at residues 8 to 32 (GFLGLLVSALLVGFLSVIFVLIWVL). The Cytochrome b561 domain maps to 15–220 (SALLVGFLSV…FGALIFWIVT (206 aa)). The Extracellular portion of the chain corresponds to 33-47 (HFREGLGWDGGALEF). The chain crosses the membrane as a helical span at residues 48-69 (NWHPVLAVTGFVFIQGIAIIVY). Heme b contacts are provided by His-50, Arg-70, and Lys-79. Over 70–78 (RLPWTWKCS) the chain is Cytoplasmic. L-ascorbate contacts are provided by Lys-79 and Lys-83. A helical membrane pass occupies residues 79-105 (KFLMKSIHAGLNAVAAILAIISVVAVF). A heme b-binding site is contributed by His-86. Residues 106-118 (DYHNVRKIPHMYS) are Extracellular-facing. A Fe(3+)-binding site is contributed by His-108. Heme b contacts are provided by residues 115-118 (HMYS) and His-120. The chain crosses the membrane as a helical span at residues 119–144 (LHSWVGLTVLILYIQQLVVGFFIFLL). At 145-151 (PWAPPSL) the chain is on the cytoplasmic side. Arg-152 serves as a coordination point for L-ascorbate. Residues 152–179 (RAIVMPIHVYSGLLLFGTVIATVLMGVT) traverse the membrane as a helical segment. His-159 and Glu-180 together coordinate heme b. The Extracellular segment spans residues 180 to 197 (EKLFFVLKNPSYHSFPPE). Residues 198–222 (GVFTNTLGLLILVFGALIFWIVTRP) traverse the membrane as a helical segment. Topologically, residues 223–286 (QWKRPREPGS…LVDTGQRSTM (64 aa)) are cytoplasmic. Lys-225 contacts heme b. Position 232 is a phosphoserine (Ser-232). Phosphothreonine is present on Thr-285.

In terms of assembly, homodimer. The cofactor is heme b. In terms of tissue distribution, highly expressed in all regions of the small intestine and colon studied in suckling animals. However, after weaning, when iron absorption declines significantly, strong expression is retained only in the duodenum. Also expressed in respiratory epithelium.

Its subcellular location is the cell membrane. It localises to the apical cell membrane. The catalysed reaction is Fe(3+)(out) + L-ascorbate(in) = monodehydro-L-ascorbate radical(in) + Fe(2+)(out) + H(+). The enzyme catalyses Cu(2+)(out) + L-ascorbate(in) = Cu(+)(out) + monodehydro-L-ascorbate radical(in) + H(+). It carries out the reaction monodehydro-L-ascorbate radical(out) + L-ascorbate(in) = monodehydro-L-ascorbate radical(in) + L-ascorbate(out). Plasma membrane reductase that uses cytoplasmic ascorbate as an electron donor to reduce extracellular Fe(3+) into Fe(2+). Probably functions in dietary iron absorption at the brush border of duodenal enterocytes by producing Fe(2+), the divalent form of iron that can be transported into enterocytes. It is also able to reduce extracellular monodehydro-L-ascorbate and may be involved in extracellular ascorbate regeneration by erythrocytes in blood. May also act as a ferrireductase in airway epithelial cells. May also function as a cupric transmembrane reductase. The protein is Plasma membrane ascorbate-dependent reductase CYBRD1 of Rattus norvegicus (Rat).